A 160-amino-acid polypeptide reads, in one-letter code: Cytochrome b6-f complex subunit 4 (160 aa).

Helical transmembrane passes span 36-56 (LLYIFPVVILGTIACNVGLAV), 95-115 (LLGVLLMVSVPAGLLTVPFLE), and 131-151 (TVFLIGTVVALWLGIGATLPI).

This sequence belongs to the cytochrome b family. PetD subfamily. As to quaternary structure, the 4 large subunits of the cytochrome b6-f complex are cytochrome b6, subunit IV (17 kDa polypeptide, petD), cytochrome f and the Rieske protein, while the 4 small subunits are petG, petL, petM and petN. The complex functions as a dimer.

The protein resides in the plastid. The protein localises to the chloroplast thylakoid membrane. Its function is as follows. Component of the cytochrome b6-f complex, which mediates electron transfer between photosystem II (PSII) and photosystem I (PSI), cyclic electron flow around PSI, and state transitions. This is Cytochrome b6-f complex subunit 4 from Pisum sativum (Garden pea).